Reading from the N-terminus, the 442-residue chain is UDP-glycosyltransferase 79B8 (442 aa).

UDP-alpha-D-glucose is bound by residues Ser-260, 319–321 (VQQ), 336–344 (HCGPGTIWE), and 358–361 (LGDQ).

The protein belongs to the UDP-glycosyltransferase family.

The chain is UDP-glycosyltransferase 79B8 (UGT79B8) from Arabidopsis thaliana (Mouse-ear cress).